Here is a 445-residue protein sequence, read N- to C-terminus: Argininosuccinate synthase (445 aa).

Residues 17–25 (AFSGGLDTS) and Ala-43 each bind ATP. Tyr-99 is a binding site for L-citrulline. 2 residues coordinate ATP: Gly-129 and Thr-131. The L-aspartate site is built by Thr-131, Asn-135, and Asp-136. Residue Asn-135 coordinates L-citrulline. Residue Asp-136 coordinates ATP. L-citrulline is bound by residues Arg-139 and Ser-192. Asp-194 serves as a coordination point for ATP. Residues Thr-201, Glu-203, and Glu-280 each contribute to the L-citrulline site.

Belongs to the argininosuccinate synthase family. Type 2 subfamily. As to quaternary structure, homotetramer.

Its subcellular location is the cytoplasm. The enzyme catalyses L-citrulline + L-aspartate + ATP = 2-(N(omega)-L-arginino)succinate + AMP + diphosphate + H(+). The protein operates within amino-acid biosynthesis; L-arginine biosynthesis; L-arginine from L-ornithine and carbamoyl phosphate: step 2/3. This is Argininosuccinate synthase from Rhodopseudomonas palustris (strain ATCC BAA-98 / CGA009).